We begin with the raw amino-acid sequence, 416 residues long: Gamma-glutamyl phosphate reductase (416 aa).

This sequence belongs to the gamma-glutamyl phosphate reductase family.

It is found in the cytoplasm. The catalysed reaction is L-glutamate 5-semialdehyde + phosphate + NADP(+) = L-glutamyl 5-phosphate + NADPH + H(+). It participates in amino-acid biosynthesis; L-proline biosynthesis; L-glutamate 5-semialdehyde from L-glutamate: step 2/2. Its function is as follows. Catalyzes the NADPH-dependent reduction of L-glutamate 5-phosphate into L-glutamate 5-semialdehyde and phosphate. The product spontaneously undergoes cyclization to form 1-pyrroline-5-carboxylate. In Streptococcus equi subsp. zooepidemicus (strain MGCS10565), this protein is Gamma-glutamyl phosphate reductase.